A 1373-amino-acid chain; its full sequence is DNA-directed RNA polymerase subunit beta (1373 aa).

The protein belongs to the RNA polymerase beta chain family. In terms of assembly, the RNAP catalytic core consists of 2 alpha, 1 beta, 1 beta' and 1 omega subunit. When a sigma factor is associated with the core the holoenzyme is formed, which can initiate transcription.

The catalysed reaction is RNA(n) + a ribonucleoside 5'-triphosphate = RNA(n+1) + diphosphate. In terms of biological role, DNA-dependent RNA polymerase catalyzes the transcription of DNA into RNA using the four ribonucleoside triphosphates as substrates. The protein is DNA-directed RNA polymerase subunit beta of Rickettsia felis (strain ATCC VR-1525 / URRWXCal2) (Rickettsia azadi).